The primary structure comprises 373 residues: Histidinol-phosphate aminotransferase (373 aa).

An N6-(pyridoxal phosphate)lysine modification is found at K230.

It belongs to the class-II pyridoxal-phosphate-dependent aminotransferase family. Histidinol-phosphate aminotransferase subfamily. In terms of assembly, homodimer. Pyridoxal 5'-phosphate serves as cofactor.

The enzyme catalyses L-histidinol phosphate + 2-oxoglutarate = 3-(imidazol-4-yl)-2-oxopropyl phosphate + L-glutamate. The protein operates within amino-acid biosynthesis; L-histidine biosynthesis; L-histidine from 5-phospho-alpha-D-ribose 1-diphosphate: step 7/9. The protein is Histidinol-phosphate aminotransferase of Synechococcus elongatus (strain ATCC 33912 / PCC 7942 / FACHB-805) (Anacystis nidulans R2).